The following is a 235-amino-acid chain: Glucosamine-6-phosphate deaminase (235 aa).

Catalysis depends on Asp-62, which acts as the Proton acceptor; for enolization step. Catalysis depends on Asn-128, which acts as the For ring-opening step. His-130 functions as the Proton acceptor; for ring-opening step in the catalytic mechanism. Glu-135 serves as the catalytic For ring-opening step.

This sequence belongs to the glucosamine/galactosamine-6-phosphate isomerase family. NagB subfamily.

It carries out the reaction alpha-D-glucosamine 6-phosphate + H2O = beta-D-fructose 6-phosphate + NH4(+). The protein operates within amino-sugar metabolism; N-acetylneuraminate degradation; D-fructose 6-phosphate from N-acetylneuraminate: step 5/5. Its function is as follows. Catalyzes the reversible isomerization-deamination of glucosamine 6-phosphate (GlcN6P) to form fructose 6-phosphate (Fru6P) and ammonium ion. The chain is Glucosamine-6-phosphate deaminase from Latilactobacillus sakei subsp. sakei (strain 23K) (Lactobacillus sakei subsp. sakei).